We begin with the raw amino-acid sequence, 625 residues long: Chaperone protein HtpG (625 aa).

The tract at residues 1 to 341 (MGKRKFKAES…SEDLSLNISR (341 aa)) is a; substrate-binding. The segment at 342–551 (EMLQHDRQLK…DGEISLEMEK (210 aa)) is b. The interval 552–625 (IINAMPDDQQ…FTNDICKVMV (74 aa)) is c.

The protein belongs to the heat shock protein 90 family. Homodimer.

It is found in the cytoplasm. Its function is as follows. Molecular chaperone. Has ATPase activity. This is Chaperone protein HtpG from Oceanobacillus iheyensis (strain DSM 14371 / CIP 107618 / JCM 11309 / KCTC 3954 / HTE831).